The following is a 404-amino-acid chain: uncharacterized protein (404 aa).

The signal sequence occupies residues 1 to 21 (MRKLGLALSIMGLLLVSIVAG). Cys22 is subject to N-acetylcysteine. Cys22 carries S-archaeol cysteine lipidation.

It belongs to the BMP lipoprotein family.

It is found in the cell membrane. This is an uncharacterized protein from Pyrococcus abyssi (strain GE5 / Orsay).